Reading from the N-terminus, the 432-residue chain is Lipoyl synthase, mitochondrial (432 aa).

The span at Thr32–Thr68 shows a compositional bias: low complexity. The segment at Thr32–Lys71 is disordered. Residues Cys150, Cys155, Cys161, Cys180, Cys184, Cys187, and Ser395 each coordinate [4Fe-4S] cluster. The region spanning Lys165–Leu384 is the Radical SAM core domain.

The protein belongs to the radical SAM superfamily. Lipoyl synthase family. [4Fe-4S] cluster is required as a cofactor.

Its subcellular location is the mitochondrion. It carries out the reaction [[Fe-S] cluster scaffold protein carrying a second [4Fe-4S](2+) cluster] + N(6)-octanoyl-L-lysyl-[protein] + 2 oxidized [2Fe-2S]-[ferredoxin] + 2 S-adenosyl-L-methionine + 4 H(+) = [[Fe-S] cluster scaffold protein] + N(6)-[(R)-dihydrolipoyl]-L-lysyl-[protein] + 4 Fe(3+) + 2 hydrogen sulfide + 2 5'-deoxyadenosine + 2 L-methionine + 2 reduced [2Fe-2S]-[ferredoxin]. It functions in the pathway protein modification; protein lipoylation via endogenous pathway; protein N(6)-(lipoyl)lysine from octanoyl-[acyl-carrier-protein]: step 2/2. Functionally, catalyzes the radical-mediated insertion of two sulfur atoms into the C-6 and C-8 positions of the octanoyl moiety bound to the lipoyl domains of lipoate-dependent enzymes, thereby converting the octanoylated domains into lipoylated derivatives. In Lodderomyces elongisporus (strain ATCC 11503 / CBS 2605 / JCM 1781 / NBRC 1676 / NRRL YB-4239) (Yeast), this protein is Lipoyl synthase, mitochondrial.